The chain runs to 182 residues: Sec-independent protein translocase protein TatB (182 aa).

A helical membrane pass occupies residues 1-21; it reads MFDIGFSELLLVFVIGLIVLG. Disordered regions lie at residues 88–107 and 121–182; these read AAES…ASDE and TQHE…SDKP. Residues 168-182 show a composition bias toward low complexity; that stretch reads AAPVVESSPSSSDKP.

The protein belongs to the TatB family. The Tat system comprises two distinct complexes: a TatABC complex, containing multiple copies of TatA, TatB and TatC subunits, and a separate TatA complex, containing only TatA subunits. Substrates initially bind to the TatABC complex, which probably triggers association of the separate TatA complex to form the active translocon.

The protein localises to the cell inner membrane. Functionally, part of the twin-arginine translocation (Tat) system that transports large folded proteins containing a characteristic twin-arginine motif in their signal peptide across membranes. Together with TatC, TatB is part of a receptor directly interacting with Tat signal peptides. TatB may form an oligomeric binding site that transiently accommodates folded Tat precursor proteins before their translocation. The polypeptide is Sec-independent protein translocase protein TatB (Salmonella typhi).